Reading from the N-terminus, the 224-residue chain is uncharacterized protein (224 aa).

The HTH gntR-type domain maps to 10–77 (TPYYLQFYNQ…DRNGFSITSL (68 aa)). The segment at residues 37–56 (ETQLAKSFGVSRSPIREAMR) is a DNA-binding region (H-T-H motif).

This is an uncharacterized protein from Bacillus subtilis (strain 168).